Here is a 198-residue protein sequence, read N- to C-terminus: CXXC-type zinc finger protein 4 (198 aa).

Positions 114–134 (NHSSSSSSSSGGAGGANPAKK) are disordered. Residues 132–173 (AKKKRKRCGVCVPCKRLINCGVCSSCRNRKTGHQICKFRKCE) form a CXXC-type zinc finger. C139, C142, C145, C151, C154, and C157 together coordinate Zn(2+). Residues 161–166 (KTGHQI) form an interaction with DVL1 region. Residues C167 and C172 each coordinate Zn(2+).

Interacts with the PDZ domain of DVL1.

The protein localises to the cytoplasm. In terms of biological role, acts as a negative regulator of the Wnt signaling pathway via its interaction with DVL1. Binds preferentially to DNA containing cytidine-phosphate-guanosine (CpG) dinucleotides over CpH (H=A, T, and C), hemimethylated-CpG and hemimethylated-hydroxymethyl-CpG. The chain is CXXC-type zinc finger protein 4 (CXXC4) from Homo sapiens (Human).